Reading from the N-terminus, the 155-residue chain is NADPH-dependent 7-cyano-7-deazaguanine reductase (155 aa).

Cys53 acts as the Thioimide intermediate in catalysis. The active-site Proton donor is the Asp60. Residues 75 to 77 (VES) and 94 to 95 (HE) contribute to the substrate site.

The protein belongs to the GTP cyclohydrolase I family. QueF type 1 subfamily.

It is found in the cytoplasm. It carries out the reaction 7-aminomethyl-7-carbaguanine + 2 NADP(+) = 7-cyano-7-deazaguanine + 2 NADPH + 3 H(+). The protein operates within tRNA modification; tRNA-queuosine biosynthesis. In terms of biological role, catalyzes the NADPH-dependent reduction of 7-cyano-7-deazaguanine (preQ0) to 7-aminomethyl-7-deazaguanine (preQ1). In Brucella abortus (strain S19), this protein is NADPH-dependent 7-cyano-7-deazaguanine reductase.